The following is a 130-amino-acid chain: Interferon alpha-inducible protein 27-like protein 2 (130 aa).

3 helical membrane-spanning segments follow: residues 8–28, 43–63, and 66–86; these read AAVG…AMGF, MSAA…VATL, and VGAA…GSVL. The segment at 93 to 130 is disordered; it reads SPSSSLPAEPEAKEDEARENVPQGEPPKPPLKSEKHEE.

Belongs to the IFI6/IFI27 family.

The protein localises to the mitochondrion membrane. Plays a role in the apoptotic process and has a pro-apoptotic activity. In Homo sapiens (Human), this protein is Interferon alpha-inducible protein 27-like protein 2.